The primary structure comprises 202 residues: Putative 3-methyladenine DNA glycosylase (202 aa).

It belongs to the DNA glycosylase MPG family.

The sequence is that of Putative 3-methyladenine DNA glycosylase from Alkaliphilus oremlandii (strain OhILAs) (Clostridium oremlandii (strain OhILAs)).